We begin with the raw amino-acid sequence, 86 residues long: CRISPR-associated endoribonuclease Cas2 (86 aa).

Residue Asp8 coordinates Mg(2+).

Belongs to the CRISPR-associated endoribonuclease Cas2 protein family. As to quaternary structure, homodimer, forms a heterotetramer with a Cas1 homodimer. The cofactor is Mg(2+).

CRISPR (clustered regularly interspaced short palindromic repeat), is an adaptive immune system that provides protection against mobile genetic elements (viruses, transposable elements and conjugative plasmids). CRISPR clusters contain sequences complementary to antecedent mobile elements and target invading nucleic acids. CRISPR clusters are transcribed and processed into CRISPR RNA (crRNA). Functions as a ssRNA-specific endoribonuclease. Involved in the integration of spacer DNA into the CRISPR cassette. Plasmid targeted by CRISPR locus P1 transform wild-type cells very poorly. This chain is CRISPR-associated endoribonuclease Cas2, found in Haloferax volcanii (strain ATCC 29605 / DSM 3757 / JCM 8879 / NBRC 14742 / NCIMB 2012 / VKM B-1768 / DS2) (Halobacterium volcanii).